Consider the following 303-residue polypeptide: Probable cell division protein WhiA (303 aa).

Residues 272 to 303 (SIQQLADSLSRPLTKSGVNHRLRKINKIADEL) constitute a DNA-binding region (H-T-H motif).

This sequence belongs to the WhiA family.

Functionally, involved in cell division and chromosome segregation. This chain is Probable cell division protein WhiA, found in Streptococcus sanguinis (strain SK36).